A 256-amino-acid chain; its full sequence is Acetyl-coenzyme A carboxylase carboxyl transferase subunit alpha (256 aa).

Positions 1–236 (MTDVARILKE…KEHLKTEINQ (236 aa)) constitute a CoA carboxyltransferase C-terminal domain.

This sequence belongs to the AccA family. As to quaternary structure, acetyl-CoA carboxylase is a heterohexamer composed of biotin carboxyl carrier protein (AccB), biotin carboxylase (AccC) and two subunits each of ACCase subunit alpha (AccA) and ACCase subunit beta (AccD).

It localises to the cytoplasm. It catalyses the reaction N(6)-carboxybiotinyl-L-lysyl-[protein] + acetyl-CoA = N(6)-biotinyl-L-lysyl-[protein] + malonyl-CoA. It participates in lipid metabolism; malonyl-CoA biosynthesis; malonyl-CoA from acetyl-CoA: step 1/1. Its function is as follows. Component of the acetyl coenzyme A carboxylase (ACC) complex. First, biotin carboxylase catalyzes the carboxylation of biotin on its carrier protein (BCCP) and then the CO(2) group is transferred by the carboxyltransferase to acetyl-CoA to form malonyl-CoA. The sequence is that of Acetyl-coenzyme A carboxylase carboxyl transferase subunit alpha from Streptococcus uberis (strain ATCC BAA-854 / 0140J).